We begin with the raw amino-acid sequence, 262 residues long: UDP-2,3-diacylglucosamine hydrolase (262 aa).

The Mn(2+) site is built by D10, H12, D47, N86, H121, H218, and H220.

This sequence belongs to the LpxH family. It depends on Mn(2+) as a cofactor.

The protein resides in the cell inner membrane. Its subcellular location is the cytoplasm. It catalyses the reaction UDP-2-N,3-O-bis[(3R)-3-hydroxytetradecanoyl]-alpha-D-glucosamine + H2O = 2-N,3-O-bis[(3R)-3-hydroxytetradecanoyl]-alpha-D-glucosaminyl 1-phosphate + UMP + 2 H(+). It participates in glycolipid biosynthesis; lipid IV(A) biosynthesis; lipid IV(A) from (3R)-3-hydroxytetradecanoyl-[acyl-carrier-protein] and UDP-N-acetyl-alpha-D-glucosamine: step 4/6. Hydrolyzes the pyrophosphate bond of UDP-2,3-diacylglucosamine to yield 2,3-diacylglucosamine 1-phosphate (lipid X) and UMP by catalyzing the attack of water at the alpha-P atom. Involved in the biosynthesis of lipid A, a phosphorylated glycolipid that anchors the lipopolysaccharide to the outer membrane of the cell. The sequence is that of UDP-2,3-diacylglucosamine hydrolase from Porphyromonas gingivalis (strain ATCC BAA-308 / W83).